We begin with the raw amino-acid sequence, 350 residues long: Phosphoribosylformylglycinamidine cyclo-ligase (350 aa).

The protein belongs to the AIR synthase family.

Its subcellular location is the cytoplasm. The catalysed reaction is 2-formamido-N(1)-(5-O-phospho-beta-D-ribosyl)acetamidine + ATP = 5-amino-1-(5-phospho-beta-D-ribosyl)imidazole + ADP + phosphate + H(+). It functions in the pathway purine metabolism; IMP biosynthesis via de novo pathway; 5-amino-1-(5-phospho-D-ribosyl)imidazole from N(2)-formyl-N(1)-(5-phospho-D-ribosyl)glycinamide: step 2/2. The chain is Phosphoribosylformylglycinamidine cyclo-ligase from Cupriavidus metallidurans (strain ATCC 43123 / DSM 2839 / NBRC 102507 / CH34) (Ralstonia metallidurans).